Here is a 263-residue protein sequence, read N- to C-terminus: Receptor expression-enhancing protein 3-A (263 aa).

2 consecutive transmembrane segments (helical) span residues 2 to 22 (VSWI…PAYF) and 35 to 55 (YVRW…EAIA). 2 disordered regions span residues 161–228 (GDET…SMRS) and 240–263 (YASL…AHHL). Acidic residues predominate over residues 199–214 (DDNTDEDVEVNSEDEV). A compositionally biased stretch (basic residues) spans 242 to 251 (SLKHKPKKRP).

This sequence belongs to the DP1 family.

It localises to the endoplasmic reticulum membrane. Functionally, microtubule-binding protein required to ensure proper cell division and nuclear envelope reassembly by sequestering the endoplasmic reticulum away from chromosomes during mitosis. Probably acts by clearing the endoplasmic reticulum membrane from metaphase chromosomes. The polypeptide is Receptor expression-enhancing protein 3-A (reep3-a) (Xenopus laevis (African clawed frog)).